The following is a 117-amino-acid chain: MMDNNEPISAEHGQAGENLAMNYLLEQGLTFIERNVRFKFGEIDLVMKNGKEWIFVEVKYRSKSQYGGAINALSSGQIKRLRRAAEHYMQLNNIDAICRFDLIAVDAGQIQWLPNAF.

It belongs to the UPF0102 family.

In Shewanella sediminis (strain HAW-EB3), this protein is UPF0102 protein Ssed_4252.